A 111-amino-acid chain; its full sequence is MAMQKAKEIVNSESVVVFSKTYCPYCVRVKELLQQLGAKFKAVELDTESDGSQIQSGLAEWTGQRTVPNVFIGGNHIGGCDATSNLHKDGKLVPLLTEAGAIAGKTATTSA.

In terms of domain architecture, Glutaredoxin spans 3–103 (MQKAKEIVNS…PLLTEAGAIA (101 aa)). A disulfide bridge links C23 with C26.

The protein belongs to the glutaredoxin family. CPYC subfamily.

The protein localises to the cytoplasm. Its function is as follows. Has a glutathione-disulfide oxidoreductase activity in the presence of NADPH and glutathione reductase. Reduces low molecular weight disulfides and proteins. This Arabidopsis thaliana (Mouse-ear cress) protein is Glutaredoxin-C2 (GRXC2).